The primary structure comprises 288 residues: Energy-coupling factor transporter ATP-binding protein EcfA2 (288 aa).

The region spanning Ile-3 to Ala-245 is the ABC transporter domain. Residue Gly-40–Ser-47 participates in ATP binding.

It belongs to the ABC transporter superfamily. Energy-coupling factor EcfA family. As to quaternary structure, forms a stable energy-coupling factor (ECF) transporter complex composed of 2 membrane-embedded substrate-binding proteins (S component), 2 ATP-binding proteins (A component) and 2 transmembrane proteins (T component).

It localises to the cell membrane. ATP-binding (A) component of a common energy-coupling factor (ECF) ABC-transporter complex. Unlike classic ABC transporters this ECF transporter provides the energy necessary to transport a number of different substrates. This is Energy-coupling factor transporter ATP-binding protein EcfA2 from Clostridium tetani (strain Massachusetts / E88).